Consider the following 503-residue polypeptide: Glutamate--tRNA ligase (503 aa).

A 'HIGH' region motif is present at residues 14–24 (PSPTGSLHIGG). The short motif at 261-265 (KLSKR) is the 'KMSKS' region element. ATP is bound at residue Lys264.

It belongs to the class-I aminoacyl-tRNA synthetase family. Glutamate--tRNA ligase type 1 subfamily. In terms of assembly, monomer.

It localises to the cytoplasm. It catalyses the reaction tRNA(Glu) + L-glutamate + ATP = L-glutamyl-tRNA(Glu) + AMP + diphosphate. Its function is as follows. Catalyzes the attachment of glutamate to tRNA(Glu) in a two-step reaction: glutamate is first activated by ATP to form Glu-AMP and then transferred to the acceptor end of tRNA(Glu). In Chloroflexus aurantiacus (strain ATCC 29366 / DSM 635 / J-10-fl), this protein is Glutamate--tRNA ligase.